The sequence spans 416 residues: L-threonine dehydratase biosynthetic IlvA (416 aa).

N6-(pyridoxal phosphate)lysine is present on Lys51. Residues Asn78, 184–188, and Ser309 contribute to the pyridoxal 5'-phosphate site; that span reads GGGGL. The ACT-like domain maps to 333–407; the sequence is HYFVINFPQR…FDNRYVNLHG (75 aa).

The protein belongs to the serine/threonine dehydratase family. Homotetramer. The cofactor is pyridoxal 5'-phosphate.

It carries out the reaction L-threonine = 2-oxobutanoate + NH4(+). It functions in the pathway amino-acid biosynthesis; L-isoleucine biosynthesis; 2-oxobutanoate from L-threonine: step 1/1. Functionally, catalyzes the anaerobic formation of alpha-ketobutyrate and ammonia from threonine in a two-step reaction. The first step involved a dehydration of threonine and a production of enamine intermediates (aminocrotonate), which tautomerizes to its imine form (iminobutyrate). Both intermediates are unstable and short-lived. The second step is the nonenzymatic hydrolysis of the enamine/imine intermediates to form 2-ketobutyrate and free ammonia. In the low water environment of the cell, the second step is accelerated by RidA. The sequence is that of L-threonine dehydratase biosynthetic IlvA (ilvA) from Lactococcus lactis subsp. lactis (strain IL1403) (Streptococcus lactis).